A 261-amino-acid chain; its full sequence is 5'-nucleotidase SurE (261 aa).

Residues D8, D9, S43, and N96 each contribute to the a divalent metal cation site.

It belongs to the SurE nucleotidase family. The cofactor is a divalent metal cation.

The protein localises to the cytoplasm. It carries out the reaction a ribonucleoside 5'-phosphate + H2O = a ribonucleoside + phosphate. In terms of biological role, nucleotidase that shows phosphatase activity on nucleoside 5'-monophosphates. The polypeptide is 5'-nucleotidase SurE (Dinoroseobacter shibae (strain DSM 16493 / NCIMB 14021 / DFL 12)).